An 802-amino-acid chain; its full sequence is Protein enabled homolog (802 aa).

The WH1 domain occupies methionine 1–leucine 111. The segment covering asparagine 143–serine 155 has biased composition (polar residues). Positions asparagine 143 to leucine 166 are disordered. Residue serine 144 is modified to Phosphoserine. Positions proline 154 to alanine 258 form a coiled coil. 7 tandem repeats follow at residues leucine 175–arginine 179, methionine 180–arginine 184, leucine 185–arginine 189, leucine 190–arginine 194, leucine 195–arginine 199, leucine 200–glutamine 204, and leucine 205–arginine 209. The 7 X 5 AA tandem repeats of [LM]-E-[QR]-[EQ]-[QR] stretch occupies residues leucine 175–arginine 209. The span at glutamine 245–methionine 254 shows a compositional bias: basic and acidic residues. Disordered stretches follow at residues glutamine 245–alanine 287 and alanine 341–threonine 622. Serine 255 is modified (phosphoserine; by PKA). Residues serine 255 to proline 278 show a composition bias toward low complexity. A compositionally biased stretch (polar residues) spans asparagine 348–serine 361. Serine 383 carries the phosphoserine modification. A compositionally biased stretch (low complexity) spans isoleucine 386 to valine 410. Residues valine 431–proline 464 show a composition bias toward pro residues. A compositionally biased stretch (low complexity) spans serine 485–alanine 505. Residues alanine 525 to proline 535 are compositionally biased toward polar residues. The segment covering proline 542–serine 553 has biased composition (pro residues). Tyrosine 557 is modified (phosphotyrosine). The segment covering leucine 561–proline 605 has biased composition (pro residues). The EVH2 block A stretch occupies residues glycine 623 to serine 643. Residues glycine 623–serine 799 are EVH2. A KLKR motif is present at residues lysine 632–lysine 635. 2 disordered regions span residues valine 639–glycine 675 and alanine 691–leucine 764. Residues arginine 664–glycine 675 show a composition bias toward gly residues. Positions serine 674–alanine 691 are EVH2 block B. The segment covering arginine 731 to glutamine 760 has biased composition (polar residues). A phosphoserine mark is found at serine 738 and serine 740. Residues aspartate 765–serine 799 are EVH2 block C. Positions aspartate 767–serine 797 form a coiled coil.

It belongs to the Ena/VASP family. In terms of assembly, homotetramer. Interacts with APBB1IP, APBB1, PFN1 and ROBO4. Isoforms, containing the polyproline-rich regions with PPLP motifs, bind the WW domain of APBB1IP. Isoforms, containing the PPSY motif, bind, in vitro, to the WW2 and WW3 domains of NEDD4 and to the WW1 domain of YAP1. Binds the SH3 domain of BAIAP2-alpha but only after the autoinhibitory region of BAIAP2-alpha has been blocked by interaction with CDC42. Interacts, via the EVH1/WH1 domain, with the Pro-rich domains from VCL, ZYX and Listeria monocytogenes actA and with TES (via LIM domain). The TES LIM domain and the Pro-rich domains from VCL or ZYX compete for the same binding site. Interaction with ZYX is important for targeting ENAH to focal adhesions and enhances production of actin-rich structures at the apical surface of cells. Binds GPHN. Heterotrimer with TES and ACTL7A. Interacts with FAT1 (via EVH1 domains). Interacts, through the Pro-rich region, with the C-terminal SH3 domain of DNMPB. Interacts with PRPF40A. NTN1-induced PKA phosphorylation on Ser-255 directly parallels the formation of filopodial protrusions. In terms of tissue distribution, expressed in heart and testis, lower levels in lung, skeletal muscle, kidney, pancreas and brain. Isoform 5 is expressed exclusively in the brain. Isoform 2 is expressed predominantly in brain, testis, ovary and fat. In the brain, isoforms 2 and 5 are expressed at highest levels in the hippocampus, cortex and midbrain, and at lowest levels in the striatum and cerebellum. Isoform 6 is expressed in brain and spleen.

It is found in the cytoplasm. It localises to the cytoskeleton. Its subcellular location is the cell projection. The protein resides in the lamellipodium. The protein localises to the filopodium. It is found in the synapse. It localises to the cell junction. Its subcellular location is the focal adhesion. Functionally, ena/VASP proteins are actin-associated proteins involved in a range of processes dependent on cytoskeleton remodeling and cell polarity such as axon guidance and lamellipodial and filopodial dynamics in migrating cells. ENAH induces the formation of F-actin rich outgrowths in fibroblasts. Acts synergistically with BAIAP2-alpha and downstream of NTN1 to promote filipodia formation. This Mus musculus (Mouse) protein is Protein enabled homolog (Enah).